A 179-amino-acid chain; its full sequence is M-zodatoxin-Lt4b (179 aa).

The signal sequence occupies residues 1–22 (MKFSIIALALAVAFVCVAESRS). A propeptide spanning residues 23-43 (EEEGYDVSEEIQAEELEEAAR) is cleaved from the precursor. Residues 40–43 (EAAR) carry the Processing quadruplet motif 1 motif. Position 61 is a glutamine amide (Gln61). An Inverted processing quadruplet motif 1 motif is present at residues 63-66 (REDS). A propeptide spanning residues 63–71 (REDSEDAGR) is cleaved from the precursor. A Processing quadruplet motif 2 motif is present at residues 68–71 (DAGR). Position 89 is a glutamine amide (Gln89). An Inverted processing quadruplet motif 2 motif is present at residues 91–94 (REDT). The propeptide occupies 91 to 99 (REDTEEAGR). The Processing quadruplet motif 3 signature appears at 96-99 (EAGR). Glutamine amide is present on Gln117. The Inverted processing quadruplet motif 3 signature appears at 119-122 (REDS). Residues 119-127 (REDSEEAGR) constitute a propeptide that is removed on maturation. A Processing quadruplet motif 4 motif is present at residues 124-127 (EAGR). Gln145 is modified (glutamine amide). The Inverted processing quadruplet motif 4 motif lies at 147-150 (REDT). A propeptide spanning residues 147–154 (REDTEEAR) is cleaved from the precursor. Positions 151 to 154 (EEAR) match the Processing quadruplet motif 5 motif. Phe178 bears the Phenylalanine amide mark.

Belongs to the cationic peptide 03 (latarcin) family. 04 subfamily. Post-translationally, cleavage of the propeptide depends on the processing quadruplet motif (PQM) (XXXR, with at least one of X being E) and the inverted PQM (RXXX, with at least one of X being E). As to expression, expressed by the venom gland.

It localises to the secreted. Its function is as follows. M-zodatoxin-Lt4b: Has antimicrobial activity against Gram-positive bacteria (A.globiformis VKM Ac-1112 (MIC=0.3 uM), and B.subtilis VKM B-501 (MIC=1.1 uM)), Gram-negative bacteria (E.coli DH5-alpha (MIC=4.4 uM), E.coli MH1 (MIC=4.4 uM), and P.aeruginosa PAO1 (MIC=&gt;35 uM)), and yeasts (P.pastoris GS115 (MIC=&gt;35 uM), and S.cerevisiae Y190 (MIC=35 uM)). Does not have hemolytic activity against rabbit erythrocytes. Causes paralysis, but is not lethal when injected into insect (M.domestica) larvae. In terms of biological role, shows no antimicrobial activity against Gram-positive bacterium B.subtilis B-501 or Gram-negative bacterium E.coli DH5-alpha at concentration up to 20 uM. The protein is M-zodatoxin-Lt4b of Lachesana tarabaevi (Spider).